Reading from the N-terminus, the 345-residue chain is Probable glucan endo-1,3-beta-glucosidase BG4 (345 aa).

The signal sequence occupies residues 1–22 (MLYSPKKLFLFFLSCIVLYVNS). N-linked (GlcNAc...) asparagine glycosylation is found at N23 and N119. Residue E128 is the Proton donor of the active site. E267 functions as the Nucleophile in the catalytic mechanism. N277 and N306 each carry an N-linked (GlcNAc...) asparagine glycan.

This sequence belongs to the glycosyl hydrolase 17 family.

The protein resides in the secreted. The catalysed reaction is Hydrolysis of (1-&gt;3)-beta-D-glucosidic linkages in (1-&gt;3)-beta-D-glucans.. In terms of biological role, may play a role in plant defense against pathogens. The protein is Probable glucan endo-1,3-beta-glucosidase BG4 of Arabidopsis thaliana (Mouse-ear cress).